The primary structure comprises 340 residues: ATPase get3 (340 aa).

Residue 34–41 (KGGVGKTT) coordinates ATP. Residue aspartate 63 is part of the active site. 2 residues coordinate ATP: glutamate 242 and asparagine 269. Residues cysteine 280 and cysteine 283 each contribute to the Zn(2+) site.

Belongs to the arsA ATPase family. As to quaternary structure, homodimer.

Its subcellular location is the cytoplasm. The protein localises to the endoplasmic reticulum. In terms of biological role, ATPase required for the post-translational delivery of tail-anchored (TA) proteins to the endoplasmic reticulum. Recognizes and selectively binds the transmembrane domain of TA proteins in the cytosol. This complex then targets to the endoplasmic reticulum by membrane-bound receptors, where the tail-anchored protein is released for insertion. This process is regulated by ATP binding and hydrolysis. ATP binding drives the homodimer towards the closed dimer state, facilitating recognition of newly synthesized TA membrane proteins. ATP hydrolysis is required for insertion. Subsequently, the homodimer reverts towards the open dimer state, lowering its affinity for the membrane-bound receptor, and returning it to the cytosol to initiate a new round of targeting. This is ATPase get3 (get3) from Sclerotinia sclerotiorum (strain ATCC 18683 / 1980 / Ss-1) (White mold).